Here is an 81-residue protein sequence, read N- to C-terminus: Cortexin-3 (81 aa).

Residues 29–49 (MTFVFVILLFIFLGILIVRCF) traverse the membrane as a helical segment.

Belongs to the cortexin family.

It is found in the membrane. In Homo sapiens (Human), this protein is Cortexin-3 (CTXN3).